A 202-amino-acid polypeptide reads, in one-letter code: MTTAALPDLNYRDLLADRLFRQRTILLTGEVDDAMAERACSELVLLAAADPKRDIVLYINSPGGSVFAGLAIYDTMKLVPNDVVTVAMGFAASMGQVLLCSGTHGKRISLAHSRIMMHQPSAGIGGTAVDIAIQAESLERMKRQSQEILAAETGHPVEQIAEDSDRDRWFTADEARDYGIVDRVVSSFAEIAPHTTAPRIGL.

Serine 93 (nucleophile) is an active-site residue. The active site involves histidine 118.

Belongs to the peptidase S14 family. As to quaternary structure, fourteen ClpP subunits assemble into 2 heptameric rings which stack back to back to give a disk-like structure with a central cavity, resembling the structure of eukaryotic proteasomes.

The protein localises to the cytoplasm. The catalysed reaction is Hydrolysis of proteins to small peptides in the presence of ATP and magnesium. alpha-casein is the usual test substrate. In the absence of ATP, only oligopeptides shorter than five residues are hydrolyzed (such as succinyl-Leu-Tyr-|-NHMec, and Leu-Tyr-Leu-|-Tyr-Trp, in which cleavage of the -Tyr-|-Leu- and -Tyr-|-Trp bonds also occurs).. Functionally, cleaves peptides in various proteins in a process that requires ATP hydrolysis. Has a chymotrypsin-like activity. Plays a major role in the degradation of misfolded proteins. This chain is ATP-dependent Clp protease proteolytic subunit 3, found in Rhodococcus jostii (strain RHA1).